The primary structure comprises 208 residues: Outer-membrane lipoprotein carrier protein (208 aa).

Residues 1–22 (MKKRLCAVLLASPLLFSAAVFA) form the signal peptide.

It belongs to the LolA family. As to quaternary structure, monomer.

Its subcellular location is the periplasm. Participates in the translocation of lipoproteins from the inner membrane to the outer membrane. Only forms a complex with a lipoprotein if the residue after the N-terminal Cys is not an aspartate (The Asp acts as a targeting signal to indicate that the lipoprotein should stay in the inner membrane). In Shewanella baltica (strain OS195), this protein is Outer-membrane lipoprotein carrier protein.